The following is a 217-amino-acid chain: Elongation factor Ts (217 aa).

The involved in Mg(2+) ion dislocation from EF-Tu stretch occupies residues 81–84 (TDFV).

Belongs to the EF-Ts family.

Its subcellular location is the cytoplasm. Functionally, associates with the EF-Tu.GDP complex and induces the exchange of GDP to GTP. It remains bound to the aminoacyl-tRNA.EF-Tu.GTP complex up to the GTP hydrolysis stage on the ribosome. The chain is Elongation factor Ts from Myxococcus xanthus (strain DK1622).